We begin with the raw amino-acid sequence, 479 residues long: Monodictyphenone cluster transcriptional coactivator mdpA (479 aa).

In terms of domain architecture, HTH iclR-type spans L77–L147. The H-T-H motif DNA-binding region spans I107 to R126. 2 disordered regions span residues G281–D305 and T314–S333. A compositionally biased stretch (pro residues) spans H289 to P298. Residues T314–H323 are compositionally biased toward low complexity.

The protein localises to the nucleus. Its function is as follows. Transcriptional coactivator; part of the gene cluster that mediates the biosynthesis of monodictyphenone, a prenyl xanthone derivative. With mdpE, coregulates the production of monodictyphenone. The sequence is that of Monodictyphenone cluster transcriptional coactivator mdpA from Emericella nidulans (strain FGSC A4 / ATCC 38163 / CBS 112.46 / NRRL 194 / M139) (Aspergillus nidulans).